Reading from the N-terminus, the 234-residue chain is Ribosomal RNA small subunit methyltransferase G (234 aa).

Residues Gly-74, Phe-79, 125 to 126 (AE), and Arg-144 each bind S-adenosyl-L-methionine.

Belongs to the methyltransferase superfamily. RNA methyltransferase RsmG family.

It localises to the cytoplasm. Its function is as follows. Specifically methylates the N7 position of a guanine in 16S rRNA. The polypeptide is Ribosomal RNA small subunit methyltransferase G (Roseiflexus castenholzii (strain DSM 13941 / HLO8)).